A 251-amino-acid polypeptide reads, in one-letter code: uncharacterized protein (251 aa).

This is an uncharacterized protein from Methanocaldococcus jannaschii (strain ATCC 43067 / DSM 2661 / JAL-1 / JCM 10045 / NBRC 100440) (Methanococcus jannaschii).